The chain runs to 342 residues: CMP-N-acetylneuraminate-beta-galactosamide-alpha-2,3-sialyltransferase 1 (342 aa).

Topologically, residues Met-1–Lys-10 are cytoplasmic. A helical; Signal-anchor for type II membrane protein transmembrane segment spans residues Val-11–Tyr-28. Residues Lys-29 to Arg-342 are Lumenal-facing. Intrachain disulfides connect Cys-61/Cys-66, Cys-63/Cys-141, and Cys-144/Cys-283. Asn-81 carries an N-linked (GlcNAc...) asparagine glycan. Gln-107 contacts substrate. The N-linked (GlcNAc...) asparagine glycan is linked to Asn-116. Substrate contacts are provided by Asn-149 and Asn-172. N-linked (GlcNAc...) asparagine glycans are attached at residues Asn-203 and Asn-229. Substrate-binding residues include Tyr-232, Tyr-268, Gly-272, Gly-292, and His-301. A glycan (N-linked (GlcNAc...) asparagine) is linked at Asn-306. Position 318 (His-318) interacts with substrate. An N-linked (GlcNAc...) asparagine glycan is attached at Asn-325.

The protein belongs to the glycosyltransferase 29 family. The soluble form derives from the membrane form by proteolytic processing.

The protein resides in the golgi apparatus. The protein localises to the golgi stack membrane. It is found in the secreted. It catalyses the reaction a beta-D-galactosyl-(1-&gt;3)-N-acetyl-alpha-D-galactosaminyl derivative + CMP-N-acetyl-beta-neuraminate = an N-acetyl-alpha-neuraminyl-(2-&gt;3)-beta-D-galactosyl-(1-&gt;3)-N-acetyl-alpha-D-galactosaminyl derivative + CMP + H(+). Its pathway is protein modification; protein glycosylation. Responsible for the synthesis of the sequence NeuAc-alpha-2,3-Gal-beta-1,3-GalNAc- found on sugar chains O-linked to Thr or Ser and also as a terminal sequence on certain gangliosides. SIAT4A and SIAT4B sialylate the same acceptor substrates but exhibit different Km values. This chain is CMP-N-acetylneuraminate-beta-galactosamide-alpha-2,3-sialyltransferase 1 (ST3GAL1), found in Gallus gallus (Chicken).